A 193-amino-acid chain; its full sequence is Large ribosomal subunit protein uL18 (193 aa).

The protein belongs to the universal ribosomal protein uL18 family. Part of the 50S ribosomal subunit. Contacts the 5S and 23S rRNAs.

Its function is as follows. This is one of the proteins that bind and probably mediate the attachment of the 5S RNA into the large ribosomal subunit, where it forms part of the central protuberance. The protein is Large ribosomal subunit protein uL18 of Methanococcus vannielii (strain ATCC 35089 / DSM 1224 / JCM 13029 / OCM 148 / SB).